Here is a 203-residue protein sequence, read N- to C-terminus: Thymidylate kinase (203 aa).

10–17 (GTEGSGKS) lines the ATP pocket.

Belongs to the thymidylate kinase family.

The enzyme catalyses dTMP + ATP = dTDP + ADP. Functionally, phosphorylation of dTMP to form dTDP in both de novo and salvage pathways of dTTP synthesis. In Dichelobacter nodosus (strain VCS1703A), this protein is Thymidylate kinase.